Reading from the N-terminus, the 96-residue chain is Small ribosomal subunit protein uS15 (96 aa).

The protein belongs to the universal ribosomal protein uS15 family. As to quaternary structure, part of the 30S ribosomal subunit. Forms a bridge to the 50S subunit in the 70S ribosome, contacting the 23S rRNA.

In terms of biological role, one of the primary rRNA binding proteins, it binds directly to 16S rRNA where it helps nucleate assembly of the platform of the 30S subunit by binding and bridging several RNA helices of the 16S rRNA. Functionally, forms an intersubunit bridge (bridge B4) with the 23S rRNA of the 50S subunit in the ribosome. This Streptomyces griseus subsp. griseus (strain JCM 4626 / CBS 651.72 / NBRC 13350 / KCC S-0626 / ISP 5235) protein is Small ribosomal subunit protein uS15.